Reading from the N-terminus, the 354-residue chain is G protein alpha o subunit (354 aa).

A lipid anchor (N-myristoyl glycine) is attached at Gly-2. A lipid anchor (S-palmitoyl cysteine) is attached at Cys-3. The 323-residue stretch at 32–354 (KDIKLLLLGA…ANNLRGCGLY (323 aa)) folds into the G-alpha domain. A G1 motif region spans residues 35–48 (KLLLLGAGESGKST). GTP contacts are provided by residues 40-47 (GAGESGKS), 176-182 (LRTRVKT), 201-205 (DVGGQ), 270-273 (NKKD), and Ala-326. Ser-47 and Thr-182 together coordinate Mg(2+). Positions 174 to 182 (DILRTRVKT) are G2 motif. Residues 197–206 (FKLFDVGGQR) form a G3 motif region. Residues 266-273 (ILFLNKKD) are G4 motif. The segment at 324–329 (TCATDT) is G5 motif.

It belongs to the G-alpha family. G(i/o/t/z) subfamily. G proteins are composed of 3 units; alpha, beta and gamma. The alpha chain contains the guanine nucleotide binding site. Expressed primarily in neuronal cell bodies in the brain, optic lobe, and thoracic and abdominal ganglia. Also expressed in antenna, oocytes and ovarian nurse cells.

Functionally, guanine nucleotide-binding proteins (G proteins) are involved as modulators or transducers in various transmembrane signaling systems. Plays a role in glial cell differentiation during embryogenesis; loco, Galphai and the G-protein coupled receptor, moody, are required in the surface glia to achieve effective insulation of the nerve cord. In Drosophila melanogaster (Fruit fly), this protein is G protein alpha o subunit (Galphao).